The following is a 137-amino-acid chain: Large ribosomal subunit protein uL16 (137 aa).

The protein belongs to the universal ribosomal protein uL16 family. As to quaternary structure, part of the 50S ribosomal subunit.

In terms of biological role, binds 23S rRNA and is also seen to make contacts with the A and possibly P site tRNAs. This chain is Large ribosomal subunit protein uL16, found in Cereibacter sphaeroides (strain ATCC 17029 / ATH 2.4.9) (Rhodobacter sphaeroides).